Here is a 108-residue protein sequence, read N- to C-terminus: Phosphoribosyl-AMP cyclohydrolase (108 aa).

Aspartate 73 is a Mg(2+) binding site. Zn(2+) is bound at residue cysteine 74. Mg(2+) is bound by residues aspartate 75 and aspartate 77. Zn(2+) is bound by residues cysteine 90 and cysteine 97.

Belongs to the PRA-CH family. Homodimer. Mg(2+) is required as a cofactor. The cofactor is Zn(2+).

The protein resides in the cytoplasm. The enzyme catalyses 1-(5-phospho-beta-D-ribosyl)-5'-AMP + H2O = 1-(5-phospho-beta-D-ribosyl)-5-[(5-phospho-beta-D-ribosylamino)methylideneamino]imidazole-4-carboxamide. The protein operates within amino-acid biosynthesis; L-histidine biosynthesis; L-histidine from 5-phospho-alpha-D-ribose 1-diphosphate: step 3/9. Catalyzes the hydrolysis of the adenine ring of phosphoribosyl-AMP. The protein is Phosphoribosyl-AMP cyclohydrolase of Lactiplantibacillus plantarum (strain ATCC BAA-793 / NCIMB 8826 / WCFS1) (Lactobacillus plantarum).